The primary structure comprises 226 residues: Glutathione peroxidase 3 (226 aa).

Positions 1 to 24 (MARLLQASCLLSLLLAGFVPQSRG) are cleaved as a signal peptide. U73 is a catalytic residue. Residue U73 is a non-standard amino acid, selenocysteine.

This sequence belongs to the glutathione peroxidase family. In terms of assembly, homotetramer. Secreted in plasma.

Its subcellular location is the secreted. The catalysed reaction is 2 glutathione + H2O2 = glutathione disulfide + 2 H2O. It carries out the reaction tert-butyl hydroperoxide + 2 glutathione = tert-butanol + glutathione disulfide + H2O. Functionally, protects cells and enzymes from oxidative damage, by catalyzing the reduction of hydrogen peroxide, lipid peroxides and organic hydroperoxide, by glutathione. The protein is Glutathione peroxidase 3 of Pongo pygmaeus (Bornean orangutan).